A 523-amino-acid chain; its full sequence is Cytochrome P450 CYP82J17 (523 aa).

A helical membrane pass occupies residues 4–24 (FLSQPITIVLAILSVLLYNIW). C462 is a binding site for heme.

This sequence belongs to the cytochrome P450 family. Mainly expressed in leaves and seed pods and, to a lower extent, in flowers and stems.

Its subcellular location is the membrane. Its pathway is steroid metabolism; cholesterol metabolism. In terms of biological role, involved in the biosynthesis of spiroketal steroid and saponin natural products from cholesterol such as diosgenin and analogs (e.g. furostanol and spirostanol), plant defense compounds used as main precursors for the industrial production of steroid hormones. During the 5,6-spiroketalization of cholesterol, may catalyze the 27-monohydroxylation of furostanol-type steroid to an intermediate product that undergoes a stereospecific formation of the terminal heterocycle to yield diosgenin. The polypeptide is Cytochrome P450 CYP82J17 (Trigonella foenum-graecum (Fenugreek)).